A 1001-amino-acid chain; its full sequence is Non-canonical poly(A) RNA polymerase protein Trf4-1 (1001 aa).

Composition is skewed to low complexity over residues 44 to 86 and 127 to 163; these read TING…NNSS and RNST…STNG. Disordered stretches follow at residues 44–92 and 115–238; these read TING…PYLS and QQQQ…AGGA. Residues 164-178 show a composition bias toward gly residues; sequence PGAGTGTSTGAGGTG. Low complexity predominate over residues 179–216; it reads TNSPATTASSTAATTTGPATSMSDTSNNPPQSTTTPAS. Positions 328 and 330 each coordinate Mn(2+). The PAP-associated domain occupies 458-517; it reads NLGVLLLEFFELYGRRFNYMKIGISIKNGGRYMPKDELQRDMVDGHRPSLLCIEDPLTPG. Disordered stretches follow at residues 631–652, 687–740, 767–963, and 977–1001; these read PTAH…PGAH, QQQQ…AQEV, ASNS…LRGT, and SSES…RDER. Over residues 635–649 the composition is skewed to basic residues; the sequence is GHSHAHSHSHGHAHP. 2 stretches are compositionally biased toward low complexity: residues 687–708 and 768–788; these read QQQQ…NQSQ and SNSW…TGSS. Over residues 827–841 the composition is skewed to gly residues; that stretch reads VGTGSNRGGGDGSGG. Residues 844-854 are compositionally biased toward polar residues; sequence YNQRNNHNSSG. Low complexity predominate over residues 855–880; the sequence is YYHQQYYVPPPMQQQLSKSNSSSNYH. Basic residues predominate over residues 881-912; the sequence is QQHHHSHSHGNHSHRQQHHHQQQHHHQQRPQH. Composition is skewed to low complexity over residues 932-955 and 977-992; these read SAGN…SNNS and SSES…SSRS.

It belongs to the DNA polymerase type-B-like family. Requires Mn(2+) as cofactor.

It localises to the cytoplasm. It catalyses the reaction RNA(n) + ATP = RNA(n)-3'-adenine ribonucleotide + diphosphate. Its function is as follows. Involved in a post-transcriptional quality control mechanism limiting inappropriate expression of genetic information. Polyadenylation is required for the degradative activity of the exosome on several of its nuclear RNA substrates. Polyadenylates RNA processing and degradation intermediates of snRNAs and mRNAs. The sequence is that of Non-canonical poly(A) RNA polymerase protein Trf4-1 from Drosophila melanogaster (Fruit fly).